A 419-amino-acid polypeptide reads, in one-letter code: S-adenosylmethionine synthase (419 aa).

His-15 is a binding site for ATP. Asp-17 serves as a coordination point for Mg(2+). Glu-43 provides a ligand contact to K(+). 2 residues coordinate L-methionine: Glu-56 and Gln-100. The segment at 100–110 (QSPDIAQGVNE) is flexible loop. Residues 171 to 173 (DGK), 248 to 249 (KF), Asp-257, 263 to 264 (RK), Ala-280, and Lys-284 each bind ATP. Asp-257 serves as a coordination point for L-methionine. Lys-288 serves as a coordination point for L-methionine.

This sequence belongs to the AdoMet synthase family. In terms of assembly, homotetramer; dimer of dimers. It depends on Mg(2+) as a cofactor. K(+) is required as a cofactor.

The protein localises to the cytoplasm. It carries out the reaction L-methionine + ATP + H2O = S-adenosyl-L-methionine + phosphate + diphosphate. It participates in amino-acid biosynthesis; S-adenosyl-L-methionine biosynthesis; S-adenosyl-L-methionine from L-methionine: step 1/1. Functionally, catalyzes the formation of S-adenosylmethionine (AdoMet) from methionine and ATP. The overall synthetic reaction is composed of two sequential steps, AdoMet formation and the subsequent tripolyphosphate hydrolysis which occurs prior to release of AdoMet from the enzyme. The protein is S-adenosylmethionine synthase of Prochlorococcus marinus (strain MIT 9313).